A 283-amino-acid polypeptide reads, in one-letter code: BTB/POZ domain-containing protein KCTD15 (283 aa).

The tract at residues 1-32 (MPHRKERPSGSSLHTHGSTGTAEGGNMSRLSL) is disordered. Low complexity predominate over residues 9-21 (SGSSLHTHGSTGT). 3 positions are modified to phosphoserine: S31, S35, and S38. A BTB domain is found at 56 to 126 (APVHIDVGGH…LRTSKLLLPD (71 aa)).

As to quaternary structure, forms oligomers, predominantly homopentamers. Interacts with KCTD1, probably forming heteropentamers depending on its abundance in a cell-type dependent manner. Interacts with TFAP2A; this interaction inhibits TFAP2A transcriptional activation.

Its subcellular location is the nucleus. During embryonic development, it is involved in neural crest formation. Inhibits AP2 transcriptional activity by interaction with its activation domain. The sequence is that of BTB/POZ domain-containing protein KCTD15 (KCTD15) from Homo sapiens (Human).